The following is a 350-amino-acid chain: Dihydroorotase (350 aa).

Zn(2+) contacts are provided by histidine 17 and histidine 19. Substrate is bound by residues 19–21 (HLR) and asparagine 45. Residues lysine 103, histidine 140, and histidine 178 each coordinate Zn(2+). Residue lysine 103 is modified to N6-carboxylysine. A substrate-binding site is contributed by histidine 140. Residue leucine 224 coordinates substrate. Residue aspartate 252 coordinates Zn(2+). Aspartate 252 is an active-site residue. The substrate site is built by histidine 256 and alanine 268.

This sequence belongs to the metallo-dependent hydrolases superfamily. DHOase family. Class II DHOase subfamily. As to quaternary structure, homodimer. The cofactor is Zn(2+).

It catalyses the reaction (S)-dihydroorotate + H2O = N-carbamoyl-L-aspartate + H(+). It functions in the pathway pyrimidine metabolism; UMP biosynthesis via de novo pathway; (S)-dihydroorotate from bicarbonate: step 3/3. Functionally, catalyzes the reversible cyclization of carbamoyl aspartate to dihydroorotate. This chain is Dihydroorotase, found in Buchnera aphidicola subsp. Acyrthosiphon pisum (strain 5A).